The primary structure comprises 70 residues: Putative membrane protein insertion efficiency factor (70 aa).

It belongs to the UPF0161 family.

Its subcellular location is the cell membrane. Its function is as follows. Could be involved in insertion of integral membrane proteins into the membrane. The sequence is that of Putative membrane protein insertion efficiency factor from Clostridium novyi (strain NT).